The chain runs to 185 residues: Protein FAM219A (185 aa).

Methionine 1 bears the N-acetylmethionine mark. Positions 1 to 131 are disordered; it reads MMEEIDRFQV…SRYSSSGYSS (131 aa). Position 47 is a phosphoserine (serine 47). The span at 52-61 shows a compositional bias: basic and acidic residues; sequence KLEKQRELAR. Polar residues predominate over residues 66–80; the sequence is KNGSMGSPVNQQPKK. Serine 72 and serine 102 each carry phosphoserine. Phosphothreonine is present on threonine 113. 2 positions are modified to phosphoserine: serine 115 and serine 122. The segment covering 122–131 has biased composition (low complexity); it reads SRYSSSGYSS.

This sequence belongs to the FAM219 family.

The sequence is that of Protein FAM219A (FAM219A) from Homo sapiens (Human).